Consider the following 309-residue polypeptide: 4-hydroxy-3-methylbut-2-enyl diphosphate reductase (309 aa).

Cys-13 provides a ligand contact to [4Fe-4S] cluster. (2E)-4-hydroxy-3-methylbut-2-enyl diphosphate is bound by residues His-42 and His-75. The dimethylallyl diphosphate site is built by His-42 and His-75. Isopentenyl diphosphate-binding residues include His-42 and His-75. Residue Cys-97 coordinates [4Fe-4S] cluster. His-125 lines the (2E)-4-hydroxy-3-methylbut-2-enyl diphosphate pocket. A dimethylallyl diphosphate-binding site is contributed by His-125. His-125 serves as a coordination point for isopentenyl diphosphate. Catalysis depends on Glu-127, which acts as the Proton donor. (2E)-4-hydroxy-3-methylbut-2-enyl diphosphate is bound at residue Thr-165. [4Fe-4S] cluster is bound at residue Cys-195. Positions 223, 224, 225, and 267 each coordinate (2E)-4-hydroxy-3-methylbut-2-enyl diphosphate. Dimethylallyl diphosphate contacts are provided by Ser-223, Ser-224, Asn-225, and Ser-267. Residues Ser-223, Ser-224, Asn-225, and Ser-267 each coordinate isopentenyl diphosphate.

This sequence belongs to the IspH family. [4Fe-4S] cluster is required as a cofactor.

It carries out the reaction isopentenyl diphosphate + 2 oxidized [2Fe-2S]-[ferredoxin] + H2O = (2E)-4-hydroxy-3-methylbut-2-enyl diphosphate + 2 reduced [2Fe-2S]-[ferredoxin] + 2 H(+). It catalyses the reaction dimethylallyl diphosphate + 2 oxidized [2Fe-2S]-[ferredoxin] + H2O = (2E)-4-hydroxy-3-methylbut-2-enyl diphosphate + 2 reduced [2Fe-2S]-[ferredoxin] + 2 H(+). Its pathway is isoprenoid biosynthesis; dimethylallyl diphosphate biosynthesis; dimethylallyl diphosphate from (2E)-4-hydroxy-3-methylbutenyl diphosphate: step 1/1. It functions in the pathway isoprenoid biosynthesis; isopentenyl diphosphate biosynthesis via DXP pathway; isopentenyl diphosphate from 1-deoxy-D-xylulose 5-phosphate: step 6/6. In terms of biological role, catalyzes the conversion of 1-hydroxy-2-methyl-2-(E)-butenyl 4-diphosphate (HMBPP) into a mixture of isopentenyl diphosphate (IPP) and dimethylallyl diphosphate (DMAPP). Acts in the terminal step of the DOXP/MEP pathway for isoprenoid precursor biosynthesis. The sequence is that of 4-hydroxy-3-methylbut-2-enyl diphosphate reductase from Chlamydia caviae (strain ATCC VR-813 / DSM 19441 / 03DC25 / GPIC) (Chlamydophila caviae).